A 379-amino-acid chain; its full sequence is Dihydroorotate dehydrogenase (quinone) (379 aa).

FMN-binding positions include 79–83 (AGCDK) and A103. K83 contacts substrate. A substrate-binding site is contributed by 128-131 (NRLG). FMN-binding residues include N160 and N193. N193 lines the substrate pocket. The Nucleophile role is filled by S196. N198 contributes to the substrate binding site. K231 and T259 together coordinate FMN. A substrate-binding site is contributed by 260–261 (NT). FMN is bound by residues G289, G318, and 339 to 340 (YT).

Belongs to the dihydroorotate dehydrogenase family. Type 2 subfamily. Monomer. FMN is required as a cofactor.

The protein localises to the cell membrane. The enzyme catalyses (S)-dihydroorotate + a quinone = orotate + a quinol. The protein operates within pyrimidine metabolism; UMP biosynthesis via de novo pathway; orotate from (S)-dihydroorotate (quinone route): step 1/1. Catalyzes the conversion of dihydroorotate to orotate with quinone as electron acceptor. The chain is Dihydroorotate dehydrogenase (quinone) from Crocosphaera subtropica (strain ATCC 51142 / BH68) (Cyanothece sp. (strain ATCC 51142)).